A 469-amino-acid chain; its full sequence is UDP-N-acetylmuramate--L-alanine ligase (469 aa).

113–119 (GTHGKTT) contacts ATP.

Belongs to the MurCDEF family.

It localises to the cytoplasm. The enzyme catalyses UDP-N-acetyl-alpha-D-muramate + L-alanine + ATP = UDP-N-acetyl-alpha-D-muramoyl-L-alanine + ADP + phosphate + H(+). The protein operates within cell wall biogenesis; peptidoglycan biosynthesis. Cell wall formation. The polypeptide is UDP-N-acetylmuramate--L-alanine ligase (Neisseria gonorrhoeae (strain ATCC 700825 / FA 1090)).